Here is a 400-residue protein sequence, read N- to C-terminus: Phosphoglycerate kinase (400 aa).

Substrate is bound by residues 23–25, Arg-38, 61–64, Arg-120, and Arg-153; these read DLN and HFGR. Residues Lys-203, Glu-325, and 355 to 358 contribute to the ATP site; that span reads GGDT.

This sequence belongs to the phosphoglycerate kinase family. As to quaternary structure, monomer.

The protein resides in the cytoplasm. The enzyme catalyses (2R)-3-phosphoglycerate + ATP = (2R)-3-phospho-glyceroyl phosphate + ADP. It functions in the pathway carbohydrate degradation; glycolysis; pyruvate from D-glyceraldehyde 3-phosphate: step 2/5. This chain is Phosphoglycerate kinase, found in Rhizobium leguminosarum bv. trifolii (strain WSM2304).